The primary structure comprises 134 residues: Methylglyoxal synthase (134 aa).

The MGS-like domain occupies 1–134; it reads MHIALIAHDE…DWRDLRRNDE (134 aa). Substrate is bound by residues H8, K12, 34-37, and 54-55; these read TGTT and SG. D60 acts as the Proton donor/acceptor in catalysis. H87 is a binding site for substrate.

This sequence belongs to the methylglyoxal synthase family.

The catalysed reaction is dihydroxyacetone phosphate = methylglyoxal + phosphate. Catalyzes the formation of methylglyoxal from dihydroxyacetone phosphate. This chain is Methylglyoxal synthase, found in Listeria monocytogenes serotype 4b (strain CLIP80459).